A 511-amino-acid chain; its full sequence is Aprataxin and PNK-like factor (511 aa).

The region spanning 1 to 108 (MSGGFELQPR…RILSIPSEVE (108 aa)) is the FHA-like domain. Ser116 bears the Phosphoserine; by ATM mark. Position 149 is a phosphoserine (Ser149). The KBM signature appears at 182–191 (RKRILPTWML). A disordered region spans residues 223–370 (KSQLNTTQQG…ATDSVLQGSE (148 aa)). 2 stretches are compositionally biased toward polar residues: residues 225 to 249 (QLNT…SAEQ) and 263 to 293 (STIS…NAQR). The span at 304–315 (VSKHKIATKRTP) shows a compositional bias: basic residues. The segment covering 324–344 (CSENCSSAQGDSLQDESQGSH) has biased composition (polar residues). A compositionally biased stretch (low complexity) spans 345–355 (SESSSNPSNPE). Residues Arg376, Tyr381, Tyr386, and Arg387 each coordinate a glycoprotein. A PBZ-type 1 zinc finger spans residues 377-398 (TSCMYGANCYRKNPVHFQHFSH). The tract at residues 406 to 416 (GVQIVGQDETD) is flexible linker. The segment at 419–440 (PECPYGPSCYRKNPQHKIEYRH) adopts a PBZ-type 2 zinc-finger fold. Residues Tyr423, Tyr428, and Arg429 each coordinate a glycoprotein. The disordered stretch occupies residues 449–497 (LDEDNDNVGQPNEYDLNDSFLDDEEEDYEPTDEDSDWEPGKEDEEKEDV). Residues 468 to 497 (FLDDEEEDYEPTDEDSDWEPGKEDEEKEDV) are compositionally biased toward acidic residues. The short motif at 476–500 (YEPTDEDSDWEPGKEDEEKEDVEEL) is the NAP1L motif element. Positions 487-511 (PGKEDEEKEDVEELLKEAKRFMKRK) form a coiled coil.

The protein belongs to the APLF family. As to quaternary structure, interacts with LIG4. Interacts with PARP1. Interacts with XRCC4. Interacts (via KBM motif) with XRCC5 and XRCC6; promoting recruitment to DNA damage sites. Interacts with XRCC1. Interacts (via C-terminal disordered region) with histones; interacts with histone H2A, H2B and H3-H4. Post-translationally, poly-ADP-ribosylated. In addition to binding non covalently poly-ADP-ribose via its PBZ-type zinc fingers, the protein is also covalently poly-ADP-ribosylated by PARP1. In terms of processing, phosphorylated in an ATM-dependent manner upon double-strand DNA break.

The protein localises to the nucleus. It is found in the chromosome. It localises to the cytoplasm. The protein resides in the cytosol. Histone chaperone involved in single-strand and double-strand DNA break repair. Recruited to sites of DNA damage through interaction with branched poly-ADP-ribose chains, a polymeric post-translational modification synthesized transiently at sites of chromosomal damage to accelerate DNA strand break repair reactions. Following recruitment to DNA damage sites, acts as a histone chaperone that mediates histone eviction during DNA repair and promotes recruitment of histone variant MACROH2A1. Also has a nuclease activity: displays apurinic-apyrimidinic (AP) endonuclease and 3'-5' exonuclease activities in vitro. Also able to introduce nicks at hydroxyuracil and other types of pyrimidine base damage. Together with PARP3, promotes the retention of the LIG4-XRCC4 complex on chromatin and accelerate DNA ligation during non-homologous end-joining (NHEJ). Also acts as a negative regulator of cell pluripotency by promoting histone exchange. Required for the embryo implantation during the epithelial to mesenchymal transition in females. This chain is Aprataxin and PNK-like factor, found in Homo sapiens (Human).